A 24-amino-acid chain; its full sequence is Glutamate dehydrogenase (24 aa).

The protein belongs to the Glu/Leu/Phe/Val dehydrogenases family. In terms of assembly, homohexamer.

It localises to the cytoplasm. It catalyses the reaction L-glutamate + NAD(+) + H2O = 2-oxoglutarate + NH4(+) + NADH + H(+). The catalysed reaction is L-glutamate + NADP(+) + H2O = 2-oxoglutarate + NH4(+) + NADPH + H(+). This is Glutamate dehydrogenase (gdhA) from Pyrococcus woesei.